We begin with the raw amino-acid sequence, 157 residues long: SsrA-binding protein (157 aa).

This sequence belongs to the SmpB family.

It is found in the cytoplasm. Its function is as follows. Required for rescue of stalled ribosomes mediated by trans-translation. Binds to transfer-messenger RNA (tmRNA), required for stable association of tmRNA with ribosomes. tmRNA and SmpB together mimic tRNA shape, replacing the anticodon stem-loop with SmpB. tmRNA is encoded by the ssrA gene; the 2 termini fold to resemble tRNA(Ala) and it encodes a 'tag peptide', a short internal open reading frame. During trans-translation Ala-aminoacylated tmRNA acts like a tRNA, entering the A-site of stalled ribosomes, displacing the stalled mRNA. The ribosome then switches to translate the ORF on the tmRNA; the nascent peptide is terminated with the 'tag peptide' encoded by the tmRNA and targeted for degradation. The ribosome is freed to recommence translation, which seems to be the essential function of trans-translation. The polypeptide is SsrA-binding protein (Clostridium novyi (strain NT)).